Here is a 218-residue protein sequence, read N- to C-terminus: MVDKTSDSGRCPAVVLAGGRSSRMGSPKAAVLLGGQTMLDRVIERLSPQVASIAVNLNAHSGGALPSGHPAIADTIPGLPGPLAGVLAAMRHARQVAPGASHVLTVPIDAPFFPGTLAARLQGALIVGDEIAVAWSLGEMHPLFALWPLAIADDLDSWIRTDEKRRVRAFIARHASVAVDFPVVATKAGPLDPFLNVNTPQQLEEAEEWLNRLEDSAI.

Residues 16 to 18, lysine 28, asparagine 56, aspartate 74, and aspartate 109 each bind GTP; that span reads LAG. Mg(2+) is bound at residue aspartate 109.

Belongs to the MobA family. Monomer. It depends on Mg(2+) as a cofactor.

Its subcellular location is the cytoplasm. The enzyme catalyses Mo-molybdopterin + GTP + H(+) = Mo-molybdopterin guanine dinucleotide + diphosphate. In terms of biological role, transfers a GMP moiety from GTP to Mo-molybdopterin (Mo-MPT) cofactor (Moco or molybdenum cofactor) to form Mo-molybdopterin guanine dinucleotide (Mo-MGD) cofactor. The protein is Molybdenum cofactor guanylyltransferase of Sinorhizobium fredii (strain NBRC 101917 / NGR234).